A 409-amino-acid chain; its full sequence is Argininosuccinate synthase (409 aa).

ATP is bound by residues 11 to 19 (AYSGGLDTS) and Ala38. The L-citrulline site is built by Tyr91 and Ser96. Residue Gly121 participates in ATP binding. Positions 123, 127, and 128 each coordinate L-aspartate. Residue Asn127 coordinates L-citrulline. Arg131, Ser182, Ser191, Glu267, and Tyr279 together coordinate L-citrulline.

It belongs to the argininosuccinate synthase family. Type 1 subfamily. Homotetramer.

The protein resides in the cytoplasm. The catalysed reaction is L-citrulline + L-aspartate + ATP = 2-(N(omega)-L-arginino)succinate + AMP + diphosphate + H(+). It participates in amino-acid biosynthesis; L-arginine biosynthesis; L-arginine from L-ornithine and carbamoyl phosphate: step 2/3. In Nitrobacter winogradskyi (strain ATCC 25391 / DSM 10237 / CIP 104748 / NCIMB 11846 / Nb-255), this protein is Argininosuccinate synthase.